Here is a 164-residue protein sequence, read N- to C-terminus: UPF0114 protein YqhA (164 aa).

3 helical membrane-spanning segments follow: residues 15–35 (LLAPVYFGLSLALIALALKFF), 53–73 (LILVLLSLVDMTLVGGLLVMV), and 136–156 (LMWYVIIHLTFVLSAFVMGYL).

Belongs to the UPF0114 family.

Its subcellular location is the cell membrane. In Escherichia coli O6:H1 (strain CFT073 / ATCC 700928 / UPEC), this protein is UPF0114 protein YqhA.